Here is a 156-residue protein sequence, read N- to C-terminus: Small ribosomal subunit protein uS7 (156 aa).

It belongs to the universal ribosomal protein uS7 family. As to quaternary structure, part of the 30S ribosomal subunit. Contacts proteins S9 and S11.

Its function is as follows. One of the primary rRNA binding proteins, it binds directly to 16S rRNA where it nucleates assembly of the head domain of the 30S subunit. Is located at the subunit interface close to the decoding center, probably blocks exit of the E-site tRNA. The sequence is that of Small ribosomal subunit protein uS7 from Jannaschia sp. (strain CCS1).